The sequence spans 162 residues: Protein SLM4 (162 aa).

Residues 127-144 (LLLLFIAEGSFPYGLLVI) form a helical membrane-spanning segment.

In terms of assembly, component of the GSE complex composed of GTR1, GTR2, SLM4, MEH1 and LTV1. Component of the EGO complex, at least composed of GTR2, SLM4 and MEH1.

It localises to the vacuole membrane. Component of the GSE complex, a GTPase complex required for intracellular sorting of GAP1 out of the endosome. Component of the EGO complex, a complex involved in the regulation of microautophagy. The sequence is that of Protein SLM4 (SLM4) from Saccharomyces cerevisiae (strain ATCC 204508 / S288c) (Baker's yeast).